The chain runs to 74 residues: uncharacterized protein (74 aa).

This is an uncharacterized protein from Caenorhabditis elegans.